Consider the following 204-residue polypeptide: MKNKKPIFVVFEGIDGSGKSTLCKSLTEKLIELGIPSAAFTEPTNLETGKYLRKFLRGEIELGKEEQIEAFLNDREESLKQNILPALNSDKNVLLDRYMYSTAAYQSGDDLSPEMILKKNLNRNFKIPDLLFYLDLSPSIALERLNRRKEGKERFETLAQLEKIRSAYEKILPKDTIRIDGNKNQNQIVQECLEIFLTNIKSKS.

13 to 20 (GIDGSGKS) provides a ligand contact to ATP.

Belongs to the thymidylate kinase family.

The catalysed reaction is dTMP + ATP = dTDP + ADP. Its function is as follows. Phosphorylation of dTMP to form dTDP in both de novo and salvage pathways of dTTP synthesis. This is Thymidylate kinase from Leptospira interrogans serogroup Icterohaemorrhagiae serovar copenhageni (strain Fiocruz L1-130).